We begin with the raw amino-acid sequence, 1433 residues long: Inositol hexakisphosphate and diphosphoinositol-pentakisphosphate kinase 1 (1433 aa).

64 to 65 (KK) provides a ligand contact to substrate. ATP contacts are provided by residues R145, K198, H205, R224, 248–251 (EEFM), and 257–259 (DVK). Position 224 to 225 (224 to 225 (RK)) interacts with substrate. Positions 259 and 273 each coordinate substrate. Residues S275, D320, and 332–334 (DVN) contribute to the ATP site. Position 337–340 (337–340 (SFVK)) interacts with substrate. The tract at residues 382–453 (PTTSGTMMEL…VLDITRLLLA (72 aa)) is polyphosphoinositide-binding domain. The interval 915-1020 (GVEEEGSAPA…PTEMKQSGLG (106 aa)) is disordered. S944 and S987 each carry phosphoserine. Over residues 1005 to 1020 (FSSSRPPTEMKQSGLG) the composition is skewed to polar residues. 2 positions are modified to phosphoserine: S1037 and S1073. Residues 1134 to 1143 (MHSSQASDNP) are compositionally biased toward polar residues. 2 disordered regions span residues 1134-1199 (MHSS…DQPS) and 1235-1257 (EPNQ…VSQP). Residues S1145 and S1152 each carry the phosphoserine modification. Residues 1168–1186 (SSGPSSTVSSAGPSSPTTV) show a composition bias toward low complexity. Composition is skewed to polar residues over residues 1187–1199 (DGNS…DQPS) and 1236–1250 (PNQS…TSQP).

Belongs to the histidine acid phosphatase family. VIP1 subfamily. As to expression, widely expressed, with a higher expression in skeletal muscle, heart and brain.

The protein resides in the cytoplasm. Its subcellular location is the cytosol. It localises to the cell membrane. The enzyme catalyses 1D-myo-inositol hexakisphosphate + ATP = 1-diphospho-1D-myo-inositol 2,3,4,5,6-pentakisphosphate + ADP. The catalysed reaction is 5-diphospho-1D-myo-inositol 1,2,3,4,6-pentakisphosphate + ATP + H(+) = 1,5-bis(diphospho)-1D-myo-inositol 2,3,4,6-tetrakisphosphate + ADP. Its function is as follows. Bifunctional inositol kinase that acts in concert with the IP6K kinases IP6K1, IP6K2 and IP6K3 to synthesize the diphosphate group-containing inositol pyrophosphates diphosphoinositol pentakisphosphate, PP-InsP5, and bis-diphosphoinositol tetrakisphosphate, (PP)2-InsP4. PP-InsP5 and (PP)2-InsP4, also respectively called InsP7 and InsP8, regulate a variety of cellular processes, including apoptosis, vesicle trafficking, cytoskeletal dynamics, exocytosis, insulin signaling and neutrophil activation. Phosphorylates inositol hexakisphosphate (InsP6) at position 1 to produce PP-InsP5 which is in turn phosphorylated by IP6Ks to produce (PP)2-InsP4. Alternatively, phosphorylates PP-InsP5 at position 1, produced by IP6Ks from InsP6, to produce (PP)2-InsP4. Activated when cells are exposed to hyperosmotic stress. The sequence is that of Inositol hexakisphosphate and diphosphoinositol-pentakisphosphate kinase 1 from Homo sapiens (Human).